Here is a 224-residue protein sequence, read N- to C-terminus: ATP-dependent dethiobiotin synthetase BioD (224 aa).

Position 12–17 (12–17 (GVGKTF)) interacts with ATP. Residue T16 coordinates Mg(2+). K37 is a catalytic residue. T41 serves as a coordination point for substrate. A Mg(2+)-binding site is contributed by E107. Residues 107-110 (EGAG), 167-168 (GS), 197-199 (PEG), and E204 each bind ATP.

This sequence belongs to the dethiobiotin synthetase family. Homodimer. Requires Mg(2+) as cofactor.

The protein localises to the cytoplasm. It catalyses the reaction (7R,8S)-7,8-diammoniononanoate + CO2 + ATP = (4R,5S)-dethiobiotin + ADP + phosphate + 3 H(+). The protein operates within cofactor biosynthesis; biotin biosynthesis; biotin from 7,8-diaminononanoate: step 1/2. In terms of biological role, catalyzes a mechanistically unusual reaction, the ATP-dependent insertion of CO2 between the N7 and N8 nitrogen atoms of 7,8-diaminopelargonic acid (DAPA, also called 7,8-diammoniononanoate) to form a ureido ring. This is ATP-dependent dethiobiotin synthetase BioD from Corynebacterium glutamicum (strain R).